A 451-amino-acid chain; its full sequence is UPF0210 protein NMC1568 (451 aa).

The protein belongs to the UPF0210 family. Homodimer.

The sequence is that of UPF0210 protein NMC1568 from Neisseria meningitidis serogroup C / serotype 2a (strain ATCC 700532 / DSM 15464 / FAM18).